The sequence spans 46 residues: Bottromycin D (46 aa).

Residues 10–46 constitute a propeptide that is removed on maturation; it reads MTADFLNDDPNNAELSSLEMEELESWGAWSDDTDQSV.

Post-translationally, the precursor peptide is first ribosomally synthesized and then highly tailored by specific enzymes to yield the final natural product. These modifications include several methylations, cyclization and the formation of t-Leu and Thia-beta-Ala residues.

It is found in the secreted. Functionally, bottromycin D is a ribosomally synthesized and post-translationally modified peptide (RiPP) that displays antibiotic activity against methicillin-resistant S.aureus (MRSA). The protein is Bottromycin D of Streptomyces sp.